Here is a 223-residue protein sequence, read N- to C-terminus: Deoxyribose-phosphate aldolase (223 aa).

Aspartate 91 (proton donor/acceptor) is an active-site residue. Residue lysine 154 is the Schiff-base intermediate with acetaldehyde of the active site. Lysine 183 serves as the catalytic Proton donor/acceptor.

Belongs to the DeoC/FbaB aldolase family. DeoC type 1 subfamily.

Its subcellular location is the cytoplasm. The enzyme catalyses 2-deoxy-D-ribose 5-phosphate = D-glyceraldehyde 3-phosphate + acetaldehyde. It functions in the pathway carbohydrate degradation; 2-deoxy-D-ribose 1-phosphate degradation; D-glyceraldehyde 3-phosphate and acetaldehyde from 2-deoxy-alpha-D-ribose 1-phosphate: step 2/2. Its function is as follows. Catalyzes a reversible aldol reaction between acetaldehyde and D-glyceraldehyde 3-phosphate to generate 2-deoxy-D-ribose 5-phosphate. The chain is Deoxyribose-phosphate aldolase from Geobacillus thermodenitrificans (strain NG80-2).